A 328-amino-acid chain; its full sequence is Glyoxylate reductase/hydroxypyruvate reductase (328 aa).

Phosphoserine is present on S36. 83–84 provides a ligand contact to substrate; that stretch reads VG. NADP(+)-binding positions include 162-164, 185-188, S217, and I243; these read GRI and RQPR. Residues R245, D269, and 293–296 each bind substrate; that span reads HIGS. The Proton donor role is filled by H293. Residue G295 coordinates NADP(+). Residue T298 is modified to Phosphothreonine.

The protein belongs to the D-isomer specific 2-hydroxyacid dehydrogenase family. In terms of assembly, homodimer.

It catalyses the reaction glycolate + NADP(+) = glyoxylate + NADPH + H(+). The enzyme catalyses (R)-glycerate + NAD(+) = 3-hydroxypyruvate + NADH + H(+). It carries out the reaction (R)-glycerate + NADP(+) = 3-hydroxypyruvate + NADPH + H(+). Enzyme with hydroxy-pyruvate reductase, glyoxylate reductase and D-glycerate dehydrogenase enzymatic activities. Reduces hydroxypyruvate to D-glycerate, glyoxylate to glycolate oxidizes D-glycerate to hydroxypyruvate. The polypeptide is Glyoxylate reductase/hydroxypyruvate reductase (Grhpr) (Mus musculus (Mouse)).